The following is a 415-amino-acid chain: 6-phospho-beta-glucosidase BglT (415 aa).

NAD(+) is bound at residue 1–64 (MRIAVIGGGS…DRFKVLISDT (64 aa)). Arginine 87 and asparagine 140 together coordinate substrate. Cysteine 162 is a binding site for Mn(2+). Position 163 (asparagine 163) interacts with substrate. Mn(2+) is bound at residue histidine 192. Tyrosine 241 (proton acceptor) is an active-site residue. Arginine 261 serves as a coordination point for substrate.

Belongs to the glycosyl hydrolase 4 family. Homodimer or homotetramer. Exists in a homodimer/homotetramer equilibrium state in solution. NAD(+) serves as cofactor. Mn(2+) is required as a cofactor.

The enzyme catalyses 6-phospho-beta-D-glucosyl-(1-&gt;4)-D-glucose + H2O = D-glucose 6-phosphate + D-glucose. In terms of biological role, hydrolyzes cellobiose 6'-phosphate into glucose 6-phosphate (Glc6P) and glucose. This chain is 6-phospho-beta-glucosidase BglT (bglT), found in Thermotoga maritima (strain ATCC 43589 / DSM 3109 / JCM 10099 / NBRC 100826 / MSB8).